Here is a 1482-residue protein sequence, read N- to C-terminus: Cystic fibrosis transmembrane conductance regulator (1482 aa).

The Cytoplasmic segment spans residues 1–77 (MQRSPLEKAS…KLINALRRCF (77 aa)). A helical transmembrane segment spans residues 78-98 (FWRFMFYGIILYLGEVTKAVQ). Residues 81–365 (FMFYGIILYL…WAVQTWYDSL (285 aa)) form the ABC transmembrane type-1 1 domain. At 99–122 (PLLLGRIIASYDPDNKAERSIAIY) the chain is on the extracellular side. A helical membrane pass occupies residues 123–146 (LGVGLCLLFIVRTLLLHPAIFGPH). Residues 147–195 (HIGMQMRIAMFSLIYKKTLKLSSRVLDKISIGQLVSLLSNNLNKFDEGL) are Cytoplasmic-facing. Residues 196–216 (ALAHFVWIAPLQVTLLMGLLW) form a helical membrane-spanning segment. The Extracellular segment spans residues 217–222 (ELLQAS). A helical membrane pass occupies residues 223–243 (AFCGLAFLVVLALFQAGLGKM). Residues 244-298 (MMKYRDQRAGKINERLVITSEMIENIQSVKAYCWEEAMEKMIENLRQTELKLTRK) lie on the Cytoplasmic side of the membrane. A helical transmembrane segment spans residues 299–319 (AAYVRYFNSSAFFFSGLFVVF). The Extracellular portion of the chain corresponds to 320–339 (LSVLPYALLKGIMLRKIFTT). The helical transmembrane segment at 340 to 358 (ISFCIVLRMAVTRQFPWAV) threads the bilayer. The Cytoplasmic segment spans residues 359–859 (QTWYDSLGAI…YLRYVTVHKS (501 aa)). Residues Trp401, Ser434, 458-465 (GSTGAGKT), and Gln493 contribute to the ATP site. The region spanning 423 to 646 (NGDNSLFFSN…RPDFSSKLMG (224 aa)) is the ABC transporter 1 domain. The S-palmitoyl cysteine moiety is linked to residue Cys524. Residues Ser549 and Ser660 each carry the phosphoserine modification. The interval 654-832 (TAERRNSIIT…EEINEEDLRE (179 aa)) is disordered R region. Ser670 bears the Phosphoserine; by PKA mark. Residue Ser686 is modified to Phosphoserine. A Glycyl lysine isopeptide (Lys-Gly) (interchain with G-Cter in ubiquitin) cross-link involves residue Lys688. 2 positions are modified to phosphoserine: Ser700 and Ser712. Thr717 bears the Phosphothreonine mark. Phosphoserine is present on residues Ser737, Ser768, Ser791, Ser796, and Ser814. A helical membrane pass occupies residues 860–880 (LIFVLIWCLVVFLAEVAACLV). Residues 860–1156 (LIFVLIWCLV…AVNSSIDVDS (297 aa)) form the ABC transmembrane type-1 2 domain. The Extracellular segment spans residues 881 to 919 (VLCLLKKTSPQDKGNSTKGANNSYAVIITSTSAYYVFYI). N-linked (GlcNAc...) asparagine glycosylation is found at Asn895 and Asn901. Residues 920-940 (YVGVADGLLALGLFRGLPLVH) traverse the membrane as a discontinuously helical segment. At 941–991 (TLITVSKILHRKMLHSVLQAPMSTLNTLKAGGILNRFSKDIAVLDDLLPLT) the chain is on the cytoplasmic side. The chain crosses the membrane as a helical span at residues 992–1012 (IFDFIQLLLIVIGAVAVVSVL). At 1013 to 1014 (KP) the chain is on the extracellular side. A helical transmembrane segment spans residues 1015–1035 (YIFLATVPVIVAFILLRAYFL). Topologically, residues 1036–1096 (HTSQQLKQLE…TANWFLYLST (61 aa)) are cytoplasmic. A helical transmembrane segment spans residues 1097-1117 (LRWFQMRIEMIFVIFFIAVTF). The Extracellular portion of the chain corresponds to 1118 to 1131 (ISILTTGEGEGTVG). A helical transmembrane segment spans residues 1132-1152 (IILTLAMNIMSTLQWAVNSSI). Over 1153–1482 (DVDSLMRSVS…TEEEVQETRL (330 aa)) the chain is Cytoplasmic. In terms of domain architecture, ABC transporter 2 spans 1212–1445 (MTVKDLTAKY…KSLFRQAISP (234 aa)). ATP-binding positions include Tyr1221 and 1246-1253 (GRTGSGKS). An interaction with GORASP2 region spans residues 1388–1482 (RTLKQAFADC…TEEEVQETRL (95 aa)). A lipid anchor (S-palmitoyl cysteine) is attached at Cys1397. Positions 1454 to 1464 (HRNSSKQRSRS) are enriched in basic residues. The segment at 1454 to 1482 (HRNSSKQRSRSKIAALKEETEEEVQETRL) is disordered. At Ser1458 the chain carries Phosphoserine. Over residues 1472–1482 (ETEEEVQETRL) the composition is skewed to acidic residues. The PDZ-binding signature appears at 1480–1482 (TRL).

It belongs to the ABC transporter superfamily. ABCC family. CFTR transporter (TC 3.A.1.202) subfamily. Monomer; does not require oligomerization for channel activity. May form oligomers in the membrane. Interacts with SLC26A3, SLC26A6 and NHERF1. Interacts with SHANK2. Interacts with MYO6. Interacts (via C-terminus) with GOPC (via PDZ domain); this promotes CFTR internalization and thereby decreases channel activity. Interacts with SLC4A7 through NHERF1. Found in a complex with MYO5B and RAB11A. Interacts with ANO1. Interacts with SLC26A8. Interacts with AHCYL1; the interaction increases CFTR activity. Interacts with CSE1L. The core-glycosylated form interacts with GORASP2 (via PDZ GRASP-type 1 domain) in respone to ER stress. Interacts with MARCHF2; the interaction leads to CFTR ubiqtuitination and degradation. Interacts with ADGRG2. N-glycosylated. In terms of processing, phosphorylated; cAMP treatment promotes phosphorylation and activates the channel. Dephosphorylation decreases the ATPase activity (in vitro). Phosphorylation at PKA sites activates the channel. Phosphorylation at PKC sites enhances the response to phosphorylation by PKA. Phosphorylated by AMPK; this inhibits channel activity. Post-translationally, ubiquitinated, leading to its degradation in the lysosome. Deubiquitination by USP10 in early endosomes enhances its endocytic recycling to the cell membrane. Ubiquitinated by RNF185 during ER stress. Ubiquitinated by MARCHF2.

It is found in the apical cell membrane. The protein localises to the early endosome membrane. Its subcellular location is the cell membrane. It localises to the recycling endosome membrane. The protein resides in the endoplasmic reticulum membrane. It is found in the nucleus. It catalyses the reaction ATP + H2O + closed Cl(-) channel = ADP + phosphate + open Cl(-) channel.. It carries out the reaction chloride(in) = chloride(out). The catalysed reaction is hydrogencarbonate(in) = hydrogencarbonate(out). The enzyme catalyses ATP + H2O = ADP + phosphate + H(+). Epithelial ion channel that plays an important role in the regulation of epithelial ion and water transport and fluid homeostasis. Mediates the transport of chloride ions across the cell membrane. Possesses an intrinsic ATPase activity and utilizes ATP to gate its channel; the passive flow of anions through the channel is gated by cycles of ATP binding and hydrolysis by the ATP-binding domains. The ion channel is also permeable to HCO(3)(-); selectivity depends on the extracellular chloride concentration. Exerts its function also by modulating the activity of other ion channels and transporters. Contributes to the regulation of the pH and the ion content of the epithelial fluid layer. Modulates the activity of the epithelial sodium channel (ENaC) complex, in part by regulating the cell surface expression of the ENaC complex. May regulate bicarbonate secretion and salvage in epithelial cells by regulating the transporter SLC4A7. Can inhibit the chloride channel activity of ANO1. Plays a role in the chloride and bicarbonate homeostasis during sperm epididymal maturation and capacitation. The sequence is that of Cystic fibrosis transmembrane conductance regulator from Sus scrofa (Pig).